A 367-amino-acid chain; its full sequence is Protein RecA (367 aa).

ATP is bound at residue 73-80 (GPESSGKT). A disordered region spans residues 345 to 367 (DEPVAKKASAKESKEAKELKEVE).

The protein belongs to the RecA family.

Its subcellular location is the cytoplasm. Its function is as follows. Can catalyze the hydrolysis of ATP in the presence of single-stranded DNA, the ATP-dependent uptake of single-stranded DNA by duplex DNA, and the ATP-dependent hybridization of homologous single-stranded DNAs. It interacts with LexA causing its activation and leading to its autocatalytic cleavage. In Janthinobacterium sp. (strain Marseille) (Minibacterium massiliensis), this protein is Protein RecA.